The primary structure comprises 305 residues: Heterogeneous nuclear ribonucleoprotein A0 (305 aa).

Position 1 is an N-acetylmethionine (methionine 1). Residues 7–86 (CKLFIGGLNV…VELKRAVSRE (80 aa)) form the RRM 1 domain. The residue at position 68 (serine 68) is a Phosphoserine. A Glycyl lysine isopeptide (Lys-Gly) (interchain with G-Cter in SUMO2) cross-link involves residue lysine 80. Phosphoserine; by MAPKAPK2 is present on serine 84. Glycyl lysine isopeptide (Lys-Gly) (interchain with G-Cter in SUMO2) cross-links involve residues lysine 96, lysine 98, lysine 99, and lysine 106. One can recognise an RRM 2 domain in the interval 98-175 (KKLFVGGLKG…HRVEVKKAVP (78 aa)). The residue at position 133 (lysine 133) is an N6-acetyllysine. Arginine 139 is subject to Omega-N-methylarginine. Residues lysine 154, lysine 159, lysine 172, and lysine 176 each participate in a glycyl lysine isopeptide (Lys-Gly) (interchain with G-Cter in SUMO2) cross-link. Disordered regions lie at residues 174 to 214 (VPKE…KGGG) and 262 to 305 (QSSY…GSSF). Gly residues-rich tracts occupy residues 181–200 (SGGGGGGSRSSRGGRGGRGR) and 269–281 (KSGGGGGGGGSSW). Position 188 is a phosphoserine (serine 188). Omega-N-methylarginine is present on arginine 284. Over residues 290–305 (YRGGYGGGGGYGGSSF) the composition is skewed to gly residues. Arginine 291 is subject to Asymmetric dimethylarginine; alternate. At arginine 291 the chain carries Dimethylated arginine; alternate. Arginine 291 carries the omega-N-methylarginine; alternate modification.

Post-translationally, phosphorylated at Ser-84 by MAPKAPK2 in response to LPS treatment, promoting stabilization of GADD45A mRNA. In terms of processing, arg-291 is dimethylated, probably to asymmetric dimethylarginine.

The protein localises to the nucleus. Its function is as follows. mRNA-binding component of ribonucleosomes. Specifically binds AU-rich element (ARE)-containing mRNAs. Involved in post-transcriptional regulation of cytokines mRNAs. The chain is Heterogeneous nuclear ribonucleoprotein A0 (HNRNPA0) from Homo sapiens (Human).